Reading from the N-terminus, the 162-residue chain is Ribonuclease (162 aa).

The first 29 residues, 1–29 (MKKISSVFTMFALIAAILFSGFIPQQAYA), serve as a signal peptide directing secretion. Positions 30-53 (ETPLTQTATNETATIQLTSDVHTL) are excised as a propeptide. Glu-125 acts as the Proton acceptor in catalysis. The active-site Proton donor is the His-154.

The protein belongs to the ribonuclease N1/T1 family.

It localises to the secreted. This is a purine-specific ribonuclease. In Bacillus intermedius, this protein is Ribonuclease.